We begin with the raw amino-acid sequence, 243 residues long: UDP-2,3-diacylglucosamine hydrolase (243 aa).

Mn(2+) is bound by residues Asp-8, His-10, Asp-41, Asn-79, and His-114. 79-80 (NR) serves as a coordination point for substrate. Residues Asp-122, Lys-164, Lys-167, and His-195 each contribute to the substrate site. His-195 and His-197 together coordinate Mn(2+).

The protein belongs to the LpxH family. Mn(2+) is required as a cofactor.

The protein localises to the cell inner membrane. It catalyses the reaction UDP-2-N,3-O-bis[(3R)-3-hydroxytetradecanoyl]-alpha-D-glucosamine + H2O = 2-N,3-O-bis[(3R)-3-hydroxytetradecanoyl]-alpha-D-glucosaminyl 1-phosphate + UMP + 2 H(+). It participates in glycolipid biosynthesis; lipid IV(A) biosynthesis; lipid IV(A) from (3R)-3-hydroxytetradecanoyl-[acyl-carrier-protein] and UDP-N-acetyl-alpha-D-glucosamine: step 4/6. Hydrolyzes the pyrophosphate bond of UDP-2,3-diacylglucosamine to yield 2,3-diacylglucosamine 1-phosphate (lipid X) and UMP by catalyzing the attack of water at the alpha-P atom. Involved in the biosynthesis of lipid A, a phosphorylated glycolipid that anchors the lipopolysaccharide to the outer membrane of the cell. This Vibrio vulnificus (strain CMCP6) protein is UDP-2,3-diacylglucosamine hydrolase.